The sequence spans 218 residues: Protein Syd (218 aa).

Belongs to the Syd family.

Its subcellular location is the cell inner membrane. In terms of biological role, interacts with the SecY protein in vivo. May bind preferentially to an uncomplexed state of SecY, thus functioning either as a chelating agent for excess SecY in the cell or as a regulatory factor that negatively controls the translocase function. This Shewanella denitrificans (strain OS217 / ATCC BAA-1090 / DSM 15013) protein is Protein Syd.